The chain runs to 572 residues: MAEEAKAKGNAAFSAGDFAAAVRHFSDAIALSPSNHVLYSNRSAAHASLQNYAEALADAQKTVDLKPDWPKAYSRLGAAHLGLRRHRDAFSAYKTGLQLDPDNAALKSGLADAQAAASRPPPTSPFATAFSGPDMWARLTADPTARANLQDPEFVKIMQDIQKDPNKFNLHLSDQRVMHAIGVLLNVKIQTPNHDENDHDADDDVSEDEVVSQPEPEHEPEAAVEVAEEEEEEEKETRDRKGQAQKEKEAGNAAYKKKDFETAIGHYSKALELDDEDISYLTNRAAVYLEMGKFEDCIKDCEKAVERGKELRSDYKMIARALTRKGTALAKMAKCSKDFEPAIEIFQKALTENRNPDTLKKLNEAEKAKKELEQQEYFDPKLADEAREKGNELFKQQKYPEATKHYTEAIKRNPKDAKAYSNRAACYTKLGAMPEGLKDAEKCIELDPTFSKGYTRKGAVQFSMKEYDKALETYREGLKHDPNNQELLDGIRRCVEQINKASRGDFTPEELKERQAKAMQDPEIQSILQDPVMTQVLTDFQENPRAAEEHVKNPMVMNKIQKLISAGIVQMR.

TPR repeat units lie at residues 2 to 35, 37 to 69, and 70 to 103; these read AEEA…SPSN, VLYS…KPDW, and PKAY…DPDN. An STI1 1 domain is found at 142-181; sequence DPTARANLQDPEFVKIMQDIQKDPNKFNLHLSDQRVMHAI. The disordered stretch occupies residues 192–253; it reads PNHDENDHDA…AQKEKEAGNA (62 aa). Acidic residues predominate over residues 198–210; that stretch reads DHDADDDVSEDEV. A compositionally biased stretch (basic and acidic residues) spans 235-253; it reads KETRDRKGQAQKEKEAGNA. The Bipartite nuclear localization signal motif lies at 241 to 258; that stretch reads KGQAQKEKEAGNAAYKKK. 6 TPR repeats span residues 244–277, 279–311, 319–356, 383–416, 417–450, and 451–484; these read AQKE…DDED, SYLT…GKEL, ARAL…NRNP, ADEA…NPKD, AKAY…DPTF, and SKGY…DPNN. The STI1 2 domain occupies 521 to 560; the sequence is DPEIQSILQDPVMTQVLTDFQENPRAAEEHVKNPMVMNKI.

Co-chaperone that forms a complex with HSP70 and HSP90 and preproteins (e.g. chloroplast preproteins). Interacts with HSP90. Post-translationally, phosphorylated. Acetylated. As to expression, expressed ubiquitously, with maximal expression in cotyledons, followed by shoots and flowers.

It localises to the cytoplasm. The protein resides in the nucleus. Mediates nuclear encoded chloroplast preproteins binding to HSP90 prior to chloroplastic sorting. Mediates the association of the molecular chaperones HSP70 and HSP90. This chain is Hsp70-Hsp90 organizing protein 1 (HOP1), found in Glycine max (Soybean).